The primary structure comprises 132 residues: Small ribosomal subunit protein uS11 (132 aa).

It belongs to the universal ribosomal protein uS11 family. As to quaternary structure, part of the 30S ribosomal subunit. Interacts with proteins S7 and S18. Binds to IF-3.

Functionally, located on the platform of the 30S subunit, it bridges several disparate RNA helices of the 16S rRNA. Forms part of the Shine-Dalgarno cleft in the 70S ribosome. This chain is Small ribosomal subunit protein uS11, found in Legionella pneumophila (strain Corby).